Here is a 402-residue protein sequence, read N- to C-terminus: mRNA cap guanine-N(7) methyltransferase (402 aa).

The span at 1–11 (MDHVLNPEEKV) shows a compositional bias: basic and acidic residues. Positions 1–75 (MDHVLNPEEK…PRLEEGHGSL (75 aa)) are disordered. Positions 35–50 (PKLSASEKSLPGNTKS) are enriched in polar residues. Basic and acidic residues predominate over residues 55 to 72 (KAAEPDSPPKRPRLEEGH). An mRNA cap 0 methyltransferase domain is found at 94 to 401 (SRIFHLRNFN…IYLLFAFEKQ (308 aa)). Residue 103–104 (NN) coordinates mRNA. Positions 107, 131, 153, 187, 210, and 215 each coordinate S-adenosyl-L-methionine.

Belongs to the class I-like SAM-binding methyltransferase superfamily. mRNA cap 0 methyltransferase family.

Its subcellular location is the nucleus. It catalyses the reaction a 5'-end (5'-triphosphoguanosine)-ribonucleoside in mRNA + S-adenosyl-L-methionine = a 5'-end (N(7)-methyl 5'-triphosphoguanosine)-ribonucleoside in mRNA + S-adenosyl-L-homocysteine. In terms of biological role, catalytic subunit of the mRNA-capping methyltransferase RNMT:RAMAC complex that methylates the N7 position of the added guanosine to the 5'-cap structure of mRNAs. Binds RNA containing 5'-terminal GpppC. This Xenopus laevis (African clawed frog) protein is mRNA cap guanine-N(7) methyltransferase (rnmt).